Consider the following 324-residue polypeptide: MSPPAAVSPPARSAELASAPAVKLPVGLSKNSAAATTVEEMEGKWDDFKFAPIRESQVSRAMTRRYFQDLDNYAESDIVIVGAGSCGLSTRYILGKKRPDLKIAIIEASVSPGGGAWLGGQLFSAMVMRKPADAFLREVGVPYEDEGNYVVVKHAALFTSTIMSKVLQLPNCKLFNATCVEDLITRPSKEGVRISGVVTNWTLVSMHHDDQSCMDPNTINAPLVISTTGHDAPMGAFCVKRLVSMGRIEKLGGMRGLDMNVAEDAIVKGTREIVPGLIVGGMELSEVDGANRMGPTFGAMVLSGLKAAEEALKVIDIRQKQNSF.

Residues C86, E107–A108, G115, and V180 contribute to the substrate site. 2,3-didehydroalanine (Cys) is present on C213. Substrate contacts are provided by residues D215, H230, M282, and R292–G294.

The protein belongs to the THI4 family. Homooctamer. Fe cation serves as cofactor. During the catalytic reaction, a sulfide is transferred from Cys-213 to a reaction intermediate, generating a dehydroalanine residue.

The protein resides in the cytoplasm. It localises to the nucleus. The catalysed reaction is [ADP-thiazole synthase]-L-cysteine + glycine + NAD(+) = [ADP-thiazole synthase]-dehydroalanine + ADP-5-ethyl-4-methylthiazole-2-carboxylate + nicotinamide + 3 H2O + 2 H(+). Its function is as follows. Involved in biosynthesis of the thiamine precursor thiazole. Catalyzes the conversion of NAD and glycine to adenosine diphosphate 5-(2-hydroxyethyl)-4-methylthiazole-2-carboxylic acid (ADT), an adenylated thiazole intermediate. The reaction includes an iron-dependent sulfide transfer from a conserved cysteine residue of the protein to a thiazole intermediate. The enzyme can only undergo a single turnover, which suggests it is a suicide enzyme. May have additional roles in adaptation to various stress conditions and in DNA damage tolerance. The sequence is that of Thiamine thiazole synthase (sti35) from Fusarium solani subsp. phaseoli (Nectria haematococca).